A 186-amino-acid chain; its full sequence is Casparian strip membrane protein 3 (186 aa).

Residues 1–26 (MKAGALELGEGSKTSIPRGGVNRGIS) lie on the Cytoplasmic side of the membrane. Residues 27–47 (ILDFILRLITIIGTLGSAIAM) form a helical membrane-spanning segment. Residues 48–74 (GTTNETLPFFTQFTQFRAEYDDLPTFT) are Extracellular-facing. The N-linked (GlcNAc...) asparagine glycan is linked to N51. Residues 75-95 (FFVIANSIVSGYLVLSLPMSI) form a helical membrane-spanning segment. The Cytoplasmic segment spans residues 96–107 (LHIVRSGARASR). A helical transmembrane segment spans residues 108–128 (IVLIFFDTAMLALLTAAASAA). Over 129-161 (SAIVYLAHKGNAQANWFAICQQFKSFCERISGS) the chain is Extracellular. Residues 162-182 (LIGSFGGIILFILLVLLSAVA) traverse the membrane as a helical segment. The Cytoplasmic segment spans residues 183 to 186 (LSRC).

The protein belongs to the Casparian strip membrane proteins (CASP) family. As to quaternary structure, homodimer and heterodimers.

Its subcellular location is the cell membrane. In terms of biological role, regulates membrane-cell wall junctions and localized cell wall deposition. Required for establishment of the Casparian strip membrane domain (CSD) and the subsequent formation of Casparian strips, a cell wall modification of the root endodermis that determines an apoplastic barrier between the intraorganismal apoplasm and the extraorganismal apoplasm and prevents lateral diffusion. The sequence is that of Casparian strip membrane protein 3 from Vitis vinifera (Grape).